Here is a 351-residue protein sequence, read N- to C-terminus: Nicotinate-nucleotide--dimethylbenzimidazole phosphoribosyltransferase (351 aa).

The active-site Proton acceptor is the Glu-318.

The protein belongs to the CobT family.

It carries out the reaction 5,6-dimethylbenzimidazole + nicotinate beta-D-ribonucleotide = alpha-ribazole 5'-phosphate + nicotinate + H(+). It functions in the pathway nucleoside biosynthesis; alpha-ribazole biosynthesis; alpha-ribazole from 5,6-dimethylbenzimidazole: step 1/2. Catalyzes the synthesis of alpha-ribazole-5'-phosphate from nicotinate mononucleotide (NAMN) and 5,6-dimethylbenzimidazole (DMB). This Chloroflexus aurantiacus (strain ATCC 29366 / DSM 635 / J-10-fl) protein is Nicotinate-nucleotide--dimethylbenzimidazole phosphoribosyltransferase.